Consider the following 494-residue polypeptide: DEAD-box ATP-dependent RNA helicase CshA (494 aa).

The Q motif signature appears at 3 to 31 (ITFQDFNLSSDLMKAINRMGFEEATPIQA). A Helicase ATP-binding domain is found at 34-204 (IPLGLSNKDV…ERFMTEPEHV (171 aa)). 47 to 54 (AQTGTGKT) is a binding site for ATP. A DEAD box motif is present at residues 152–155 (DEAD). The Helicase C-terminal domain occupies 215 to 375 (NIQQFYLEVQ…RMKEPTLDEA (161 aa)). The interval 413–494 (VTVVAAAIKM…SGDRRQKKSY (82 aa)) is required for dimerization or oligomerization. Positions 429 to 494 (DTPVRLTDEA…SGDRRQKKSY (66 aa)) are disordered. Basic residues predominate over residues 443-452 (KRYKNQRSSK). Positions 473–488 (SYDKKRSNDRRSSGDR) are enriched in basic and acidic residues.

This sequence belongs to the DEAD box helicase family. CshA subfamily. In terms of assembly, homodimer or oligomer. May interact with RNA helicases CshB and DbpA (DeaD). Probably a component of the RNA degradosome complex composed of rny, rnjA, rnjB, pnp, pfkA and eno, and possibly also rnpA (although rnjA and rnjB's presence is unclear). Interacts with ribosomal proteins L1 and L3 (rplA and rplC) and the protein component of RNase RnpA. Interacts with the RNA polymerase core. Mg(2+) is required as a cofactor.

The protein resides in the cytoplasm. It localises to the nucleoid. It is found in the cell membrane. The enzyme catalyses ATP + H2O = ADP + phosphate + H(+). RNA helicase activity is inhibited by EDTA. Its function is as follows. The most abundant DEAD-box RNA helicase. An ATP-dependent RNA helicase with RNA-dependent ATPase activity. May work in conjunction with the cold shock proteins to ensure proper initiation of transcription at low and optimal temperatures. In vitro, unwinds dsRNA in both 5'- and 3'- directions. Plays a role in ribosomal 50S subunit assembly. Its deletion leads to changes in mRNA levels for over 200 transcripts. The polypeptide is DEAD-box ATP-dependent RNA helicase CshA (Bacillus subtilis (strain 168)).